The sequence spans 77 residues: Large ribosomal subunit protein uL29 (77 aa).

The protein belongs to the universal ribosomal protein uL29 family.

This is Large ribosomal subunit protein uL29 from Corynebacterium urealyticum (strain ATCC 43042 / DSM 7109).